A 241-amino-acid polypeptide reads, in one-letter code: Meiotically up-regulated gene 130 protein (241 aa).

The protein resides in the mitochondrion. Functionally, has a role in meiosis. This is Meiotically up-regulated gene 130 protein (mug130) from Schizosaccharomyces pombe (strain 972 / ATCC 24843) (Fission yeast).